We begin with the raw amino-acid sequence, 129 residues long: Protein PerB (129 aa).

Positive regulatory protein of bfpA, the gene coding for the bundle-forming pilus of EPEC. The sequence is that of Protein PerB (perB) from Escherichia coli O111:H-.